The following is a 168-amino-acid chain: Mitochondrial inner membrane protein SHH4 (168 aa).

The N-terminal 23 residues, 1–23 (MSSTKFLKPLCRIRAFHTSIARS), are a transit peptide targeting the mitochondrion. The Mitochondrial matrix portion of the chain corresponds to 24–65 (FTIPFLPKIPQKPGGVSGTANDSSYMPPESRAQGSYHWIVER). Residues 66-86 (GLSLAVLPLIAVPLVTTGPIS) form a helical membrane-spanning segment. Residues 87-92 (TFTDTF) lie on the Mitochondrial intermembrane side of the membrane. The chain crosses the membrane as a helical span at residues 93-113 (LSLVLLGHCHIGFQSCIIDYI). Cys-101 lines the heme pocket. Tyr-112 is an a ubiquinone binding site. The Mitochondrial matrix segment spans residues 114-120 (SERVYGK). The helical transmembrane segment at 121–141 (VHHYAMYLLSLGSFLSFVGIY) threads the bilayer. Topologically, residues 142 to 168 (KLESQEAGLIASLKSLWDNKPVEKKRQ) are mitochondrial intermembrane.

It belongs to the CybS family. Interacts with SDH3.

It localises to the mitochondrion inner membrane. Functionally, homolog of SDH4, but seems not to be a stoichiometric subunit of either the succinate dehydrogenase (SDH) complex or the mitochondrial inner membrane translocase TIM22 complex. The sequence is that of Mitochondrial inner membrane protein SHH4 from Saccharomyces cerevisiae (strain ATCC 204508 / S288c) (Baker's yeast).